We begin with the raw amino-acid sequence, 525 residues long: MVQPADIDVPETPARPVLVVDFGAQYAQLIARRVREARVFSEVIPHTASIEEIRARQPVALVLSGGPASVYADGAPKLDPALLDLGVPVLGICYGFQAMAQALGGIVAHTGTREYGRTELKVLGGKLHSDLPEVQPVWMSHGDAVTAAPDGFDVVASSAGAPVAAFEAFDRRLAGVQYHPEVMHTPHGQQVLSRFLHDFAGLGAQWTPANIANALIEQVRTQIGDGHAICGLSGGVDSAVAAALVQRAIGDRLTCVFVDHGLLRAGERAQVQRDFVAATGANLVTVDAAETFLEALSGVSAPEGKRKIIGRQFIRAFEGAVRDVLDGKTAEFLVQGTLYPDVVESGGGSGTANIKSHHNVGGLPDDLKFTLVEPLRLLFKDEVRAVGRELGLPEEIVARQPFPGPGLGIRIVGEVTAKRVDTLRHADSIVREELTAAGLDNQIWQCPVVLLADVRSVGVQGDGRTYGHPIVLRPVSSEDAMTADWTRVPYEVLERISTRITNEVAEVNRVVLDITSKPPATIEWE.

In terms of domain architecture, Glutamine amidotransferase type-1 spans 16 to 205; it reads PVLVVDFGAQ…LHDFAGLGAQ (190 aa). The Nucleophile role is filled by C93. Residues H179 and E181 contribute to the active site. The GMPS ATP-PPase domain maps to 206–399; sequence WTPANIANAL…LGLPEEIVAR (194 aa). An ATP-binding site is contributed by 233 to 239; the sequence is SGGVDSA.

Homodimer.

The enzyme catalyses XMP + L-glutamine + ATP + H2O = GMP + L-glutamate + AMP + diphosphate + 2 H(+). It participates in purine metabolism; GMP biosynthesis; GMP from XMP (L-Gln route): step 1/1. Its function is as follows. Catalyzes the synthesis of GMP from XMP. This Mycobacterium tuberculosis (strain CDC 1551 / Oshkosh) protein is GMP synthase [glutamine-hydrolyzing] (guaA).